An 88-amino-acid polypeptide reads, in one-letter code: UPF0297 protein SAK_2030 (88 aa).

This sequence belongs to the UPF0297 family.

The polypeptide is UPF0297 protein SAK_2030 (Streptococcus agalactiae serotype Ia (strain ATCC 27591 / A909 / CDC SS700)).